The sequence spans 166 residues: Small ribosomal subunit protein uS5 (166 aa).

The S5 DRBM domain occupies Tyr12 to Val75.

This sequence belongs to the universal ribosomal protein uS5 family. Part of the 30S ribosomal subunit. Contacts proteins S4 and S8.

Its function is as follows. With S4 and S12 plays an important role in translational accuracy. In terms of biological role, located at the back of the 30S subunit body where it stabilizes the conformation of the head with respect to the body. In Pseudomonas entomophila (strain L48), this protein is Small ribosomal subunit protein uS5.